A 342-amino-acid polypeptide reads, in one-letter code: D-erythrose-4-phosphate dehydrogenase (342 aa).

Residue 11–12 coordinates NAD(+); the sequence is RI. Residues 153–155, Arg-199, 212–213, and Arg-235 each bind substrate; these read SCT and TK. Cys-154 serves as the catalytic Nucleophile. Residue Asn-317 coordinates NAD(+).

It belongs to the glyceraldehyde-3-phosphate dehydrogenase family. Epd subfamily. As to quaternary structure, homotetramer.

It is found in the cytoplasm. The catalysed reaction is D-erythrose 4-phosphate + NAD(+) + H2O = 4-phospho-D-erythronate + NADH + 2 H(+). The protein operates within cofactor biosynthesis; pyridoxine 5'-phosphate biosynthesis; pyridoxine 5'-phosphate from D-erythrose 4-phosphate: step 1/5. Functionally, catalyzes the NAD-dependent conversion of D-erythrose 4-phosphate to 4-phosphoerythronate. The protein is D-erythrose-4-phosphate dehydrogenase of Shewanella denitrificans (strain OS217 / ATCC BAA-1090 / DSM 15013).